We begin with the raw amino-acid sequence, 635 residues long: Chaperone protein DnaK (635 aa).

At Thr198 the chain carries Phosphothreonine; by autocatalysis. A disordered region spans residues 598-635 (YAKAQPGEEQAGGAPHEGEAKDEKVVDADFEEVKEDKK). A compositionally biased stretch (basic and acidic residues) spans 613 to 624 (HEGEAKDEKVVD). Positions 625-635 (ADFEEVKEDKK) are enriched in acidic residues.

Belongs to the heat shock protein 70 family.

Its function is as follows. Acts as a chaperone. The polypeptide is Chaperone protein DnaK (Geotalea uraniireducens (strain Rf4) (Geobacter uraniireducens)).